The sequence spans 482 residues: Glutamyl-tRNA(Gln) amidotransferase subunit A (482 aa).

Residues Lys75 and Ser150 each act as charge relay system in the active site. Ser174 acts as the Acyl-ester intermediate in catalysis.

This sequence belongs to the amidase family. GatA subfamily. In terms of assembly, heterotrimer of A, B and C subunits.

It carries out the reaction L-glutamyl-tRNA(Gln) + L-glutamine + ATP + H2O = L-glutaminyl-tRNA(Gln) + L-glutamate + ADP + phosphate + H(+). Functionally, allows the formation of correctly charged Gln-tRNA(Gln) through the transamidation of misacylated Glu-tRNA(Gln) in organisms which lack glutaminyl-tRNA synthetase. The reaction takes place in the presence of glutamine and ATP through an activated gamma-phospho-Glu-tRNA(Gln). In Deinococcus radiodurans (strain ATCC 13939 / DSM 20539 / JCM 16871 / CCUG 27074 / LMG 4051 / NBRC 15346 / NCIMB 9279 / VKM B-1422 / R1), this protein is Glutamyl-tRNA(Gln) amidotransferase subunit A.